The sequence spans 494 residues: MKSIMVVGTTSHAGKSLLTTAICRILSRRGWRVAPFKGQNMALNAYVTASGGEIGYAQAVQAWAAGVVPWVEMNPILLKPQGDMTSQVIIKGRSVGKVSASDYYEQYFELGWRTIEESLQHLGTEFDLLVCEGAGSPAEINLKHRDLTNMRVAKYLNAPTMLVVDIDRGGAFAHVVGTLELLEPDERALIKGVVINKFRGQRSLLDPGIKWLEERTGIPVIGVIPYLQEVFSTEDSLDLLERQSSSSKAQTDLNIAVIRLPRIANFTDFDPLESESTVSVKYLSPKQDLGHPDAVIIPGTKTTIADLLLLQKSGMAEAIQHYAASGGTVLGICGGYQMLGQIIADPEGIEGQAGRFQGLNLLPIRTVITGQKIARQRQVSSNYPQQGLPVNGFEIHQGRSRIEQQGIDPQSYHALFDDINLGLVDSCQSVWGSYLHGLFDNGPWRRAWLNRLRQQRGLKSLPTGVANYREQREQILDSLATEVESHLDLTPFLS.

The 193-residue stretch at 252-444 folds into the GATase cobBQ-type domain; it reads DLNIAVIRLP…LHGLFDNGPW (193 aa). The Nucleophile role is filled by Cys333. Residue His436 is part of the active site.

It belongs to the CobB/CobQ family. CobQ subfamily.

It participates in cofactor biosynthesis; adenosylcobalamin biosynthesis. Its function is as follows. Catalyzes amidations at positions B, D, E, and G on adenosylcobyrinic A,C-diamide. NH(2) groups are provided by glutamine, and one molecule of ATP is hydrogenolyzed for each amidation. The sequence is that of Cobyric acid synthase from Nostoc punctiforme (strain ATCC 29133 / PCC 73102).